The following is a 537-amino-acid chain: Cytoplasmic 60S subunit biogenesis factor REI1 homolog (537 aa).

C2H2-type zinc fingers lie at residues Tyr18–His42 and Lys83–His107. 2 disordered regions span residues His101–Glu151 and Ser163–Leu204. The segment covering Glu192 to Leu204 has biased composition (low complexity). A C2H2-type 3 zinc finger spans residues Asn260–His284. Residues Asp312 to Glu322 show a composition bias toward acidic residues. Disordered stretches follow at residues Asp312–Leu361 and Gly382–Ile401. A compositionally biased stretch (basic and acidic residues) spans Glu323 to Asp339. The span at Glu340 to Ser356 shows a compositional bias: acidic residues. The segment covering Lys383–His395 has biased composition (basic residues).

The protein belongs to the REI1 family. Associates with nascent pre-60S particles that have not yet entered the translating pool, and is released from mature 60S subunits.

It is found in the cytoplasm. In terms of biological role, pre-60S-associated factor involved in the cytoplasmic maturation of the 60S subunit. Involved in the dissociation and recycling of other late pre-60S factors before newly synthesized large ribosomal subunits enter translation. This chain is Cytoplasmic 60S subunit biogenesis factor REI1 homolog, found in Chaetomium thermophilum (strain DSM 1495 / CBS 144.50 / IMI 039719) (Thermochaetoides thermophila).